The primary structure comprises 425 residues: Serine--tRNA ligase (425 aa).

231 to 233 contacts L-serine; the sequence is TAE. Residue 262–264 participates in ATP binding; it reads RSE. Glutamate 285 provides a ligand contact to L-serine. 349–352 provides a ligand contact to ATP; it reads EISS. Serine 385 contributes to the L-serine binding site.

This sequence belongs to the class-II aminoacyl-tRNA synthetase family. Type-1 seryl-tRNA synthetase subfamily. As to quaternary structure, homodimer. The tRNA molecule binds across the dimer.

The protein localises to the cytoplasm. It carries out the reaction tRNA(Ser) + L-serine + ATP = L-seryl-tRNA(Ser) + AMP + diphosphate + H(+). The catalysed reaction is tRNA(Sec) + L-serine + ATP = L-seryl-tRNA(Sec) + AMP + diphosphate + H(+). It functions in the pathway aminoacyl-tRNA biosynthesis; selenocysteinyl-tRNA(Sec) biosynthesis; L-seryl-tRNA(Sec) from L-serine and tRNA(Sec): step 1/1. Catalyzes the attachment of serine to tRNA(Ser). Is also able to aminoacylate tRNA(Sec) with serine, to form the misacylated tRNA L-seryl-tRNA(Sec), which will be further converted into selenocysteinyl-tRNA(Sec). The polypeptide is Serine--tRNA ligase (Bartonella quintana (strain Toulouse) (Rochalimaea quintana)).